We begin with the raw amino-acid sequence, 645 residues long: 1,4-alpha-glucan branching enzyme GlgB (645 aa).

Asp-309 functions as the Nucleophile in the catalytic mechanism. The active-site Proton donor is the Glu-352. The tract at residues Val-619–Arg-645 is disordered. Polar residues predominate over residues Arg-636–Arg-645.

Belongs to the glycosyl hydrolase 13 family. GlgB subfamily. As to quaternary structure, monomer.

It carries out the reaction Transfers a segment of a (1-&gt;4)-alpha-D-glucan chain to a primary hydroxy group in a similar glucan chain.. It functions in the pathway glycan biosynthesis; glycogen biosynthesis. Its function is as follows. Catalyzes the formation of the alpha-1,6-glucosidic linkages in glycogen by scission of a 1,4-alpha-linked oligosaccharide from growing alpha-1,4-glucan chains and the subsequent attachment of the oligosaccharide to the alpha-1,6 position. The chain is 1,4-alpha-glucan branching enzyme GlgB from Bacillus cereus (strain G9842).